A 1133-amino-acid chain; its full sequence is MDENSELGGLETMETLTELGDELTLGDIDEMLQFVSNQVGEFSDLFSEQLCSSFPGGGGGSGSGGTSNNSSGRGTSGGAADPAVQRSFSQVPLSTFSPSSTSPQAPALQVKVSPTPPRATPVLQPRPQPQPQPPAQLQQQTVMITPTFSTAPQTRIIQQPLIYQNAATSFQVLQPQVQSLVTSSQVQPVTIQQQVQTVQAQRVLTQTANGTLQTLAPATVQTVATPQVQQVPVLVQPQIIKTDSLVLTTLKTDGSPVMAAVQNPALTALTAPIQTAALQVPTLVGSNGAILTTMPVMMGQEKVPIKQVPGGVKQLEPPKEGERRTTHNIIEKRYRSSINDKIIELKDLVMGTDAKMHKSGVLRKAIDYIKYLQQVNHKLRQENMVLKLANQKNKLLKGIDLGSLVDSDVDLKIDDFNQNVLLMSPPASDSGSQAGFSPYSIDSEPGSPLLDDAKVKDEPDSPPVALGMVDRSRILLCVLTFLGLSFNPLTSLLQWGGAHNPDQHPYSGSGRNVLSLESGSGGWFDWMMPTLLLWLLNGVIVLSVFVKLLVHGEPVIRPHSRSSVTFWRHRKQADLDLAKGDFAAAAANLQTCLSVLGRALPTSRLDLACSLSWNVIRYSLQKLRLVRWLLKKVFQRWRATPATAAGFEDEAKSSARDAALAYHRLHQLHITGKLPAGSACSDVHMALCAVNLAECAEEKIPPSTLVEIHLTAAMGLKTRCGGKLGFLASYFLNRAQSLCGPEHSAVPDSLRWLCHPLGQKFFMERSWSIKSAAKDSLYCAQRNPADPIAQVHQAFCKHLLERAVEALVKPQAKKKAGDREEESCEFSSALEFLKLLHSFVDSVGFVASPFSSSSVLRSALGPDVVCRWWTSAITVAISWLQGDDAAVRSHFTEVERVPKALEVTESPLVKAVFYACRAMHASLSGKADGQQNSFCHCERASGHLWSSLNVSGTTSDPSLNHVVQLLTCDLLLSLRTTLWQKQASASQLLGETYHASGTELAGFQRDLGSLRRLAHSFRPAYRKVFLHEATVRLMAGASPTRTHQLLEHSLRRRTTQNTKHGEVDTWPGQRERATAILLACRHLPLSFLSSPGQRAVLLAEAARTLEKVGDRRSCSDCQQMIVKLGGGTAIAAS.

Residues 1–50 form a transcriptional activation (acidic) region; the sequence is MDENSELGGLETMETLTELGDELTLGDIDEMLQFVSNQVGEFSDLFSEQL. Topologically, residues 1-473 are cytoplasmic; sequence MDENSELGGL…VALGMVDRSR (473 aa). Gly residues predominate over residues 56 to 65; the sequence is GGGGGSGSGG. The segment at 56 to 136 is disordered; sequence GGGGGSGSGG…PQPQPQPPAQ (81 aa). Residues 92 to 109 are compositionally biased toward low complexity; the sequence is PLSTFSPSSTSPQAPALQ. A compositionally biased stretch (pro residues) spans 114 to 134; the sequence is PTPPRATPVLQPRPQPQPQPP. The interaction with LMNA stretch occupies residues 229-483; the sequence is QQVPVLVQPQ…ILLCVLTFLG (255 aa). In terms of domain architecture, bHLH spans 322-372; it reads ERRTTHNIIEKRYRSSINDKIIELKDLVMGTDAKMHKSGVLRKAIDYIKYL. The leucine-zipper stretch occupies residues 372-393; it reads LQQVNHKLRQENMVLKLANQKN. Lys456 is covalently cross-linked (Glycyl lysine isopeptide (Lys-Gly) (interchain with G-Cter in SUMO2)). The helical transmembrane segment at 474-494 threads the bilayer; the sequence is ILLCVLTFLGLSFNPLTSLLQ. The Lumenal segment spans residues 495 to 525; it reads WGGAHNPDQHPYSGSGRNVLSLESGSGGWFD. The chain crosses the membrane as a helical span at residues 526 to 546; sequence WMMPTLLLWLLNGVIVLSVFV. Residues 547–1133 are Cytoplasmic-facing; it reads KLLVHGEPVI…LGGGTAIAAS (587 aa). Position 1090 is a phosphoserine (Ser1090).

This sequence belongs to the SREBP family. As to quaternary structure, homodimer; efficient DNA binding of the soluble transcription factor fragment requires dimerization with another bHLH protein. Interacts with LMNA. Forms a tight complex with SCAP, the SCAP-SREBP complex, in the endoplasmic reticulum membrane and the Golgi apparatus. Interacts with PAQR3; the interaction anchors the SCAP-SREBP complex to the Golgi apparatus in low cholesterol conditions. Interacts (via C-terminal domain) with RNF139. Processed in the Golgi apparatus, releasing the protein from the membrane. At low cholesterol the SCAP-SREBP complex is recruited into COPII vesicles for export from the endoplasmic reticulum. In the Golgi, complex SREBPs are cleaved sequentially by site-1 (MBTPS1, S1P) and site-2 (MBTPS2, S2P) proteases. The first cleavage by site-1 protease occurs within the luminal loop, the second cleavage by site-2 protease occurs within the first transmembrane domain, releasing the transcription factor from the Golgi membrane. Apoptosis triggers cleavage by the cysteine proteases caspase-3 and caspase-7. Cleavage and activation is induced by mediated cholesterol efflux. Post-translationally, phosphorylated by AMPK, leading to suppress protein processing and nuclear translocation, and repress target gene expression. In terms of processing, SCAP-free SREBF2 is ubiquitinated by the BCR(ARMC5) complex, leading to its degradation. Ubiquitinated; the nuclear form has a rapid turnover and is rapidly ubiquitinated and degraded by the proteasome in the nucleus.

The protein resides in the endoplasmic reticulum membrane. It is found in the golgi apparatus membrane. Its subcellular location is the cytoplasmic vesicle. The protein localises to the COPII-coated vesicle membrane. It localises to the nucleus. Its activity is regulated as follows. Activation by cleavage is down-regulated upon activation of SIRT3-dependent PRKAA1/AMPK-alpha signaling cascade which leads to inhibition of ATP-consuming lipogenesis to restore cellular energy balance. Its function is as follows. Precursor of the transcription factor form (Processed sterol regulatory element-binding protein 2), which is embedded in the endoplasmic reticulum membrane. Low sterol concentrations promote processing of this form, releasing the transcription factor form that translocates into the nucleus and activates transcription of genes involved in cholesterol biosynthesis. Functionally, key transcription factor that regulates expression of genes involved in cholesterol biosynthesis. Binds to the sterol regulatory element 1 (SRE-1) (5'-ATCACCCCAC-3'). Has dual sequence specificity binding to both an E-box motif (5'-ATCACGTGA-3') and to SRE-1 (5'-ATCACCCCAC-3'). Regulates transcription of genes related to cholesterol synthesis pathway. Regulates hepatic lipogenesis. The protein is Sterol regulatory element-binding protein 2 of Rattus norvegicus (Rat).